The following is a 400-amino-acid chain: Endoplasmin (400 aa).

K1 carries the post-translational modification N6-succinyllysine. Residue N42 is glycosylated (N-linked (GlcNAc...) asparagine). Residue S44 is modified to Phosphoserine. K76 bears the N6-acetyllysine mark. N78 and N99 each carry an N-linked (GlcNAc...) asparagine glycan. Position 230 is an N6-succinyllysine (K230). Residues 346–400 (IDPEAQVEEEPEEEPEDTTEDTEQDEEEEVDAGTEEEEEEEQETAKESTAEKDEL) are disordered. A compositionally biased stretch (acidic residues) spans 350–387 (AQVEEEPEEEPEDTTEDTEQDEEEEVDAGTEEEEEEEQ). Phosphothreonine is present on T379. Positions 388–400 (ETAKESTAEKDEL) are enriched in basic and acidic residues. Residues 397–400 (KDEL) carry the Prevents secretion from ER motif.

It belongs to the heat shock protein 90 family. In terms of assembly, homodimer; disulfide-linked. Component of an EIF2 complex at least composed of CELF1/CUGBP1, CALR, CALR3, EIF2S1, EIF2S2, HSP90B1 and HSPA5. Part of a large chaperone multiprotein complex comprising DNAJB11, HSP90B1, HSPA5, HYOU, PDIA2, PDIA4, PDIA6, PPIB, SDF2L1, UGGT1 and very small amounts of ERP29, but not, or at very low levels, CALR nor CANX. Interacts with AIMP1; regulates its retention in the endoplasmic reticulum. Hyperglycosylated form interacts with OS9; promoting its degradation by the endoplasmic reticulum associated degradation (ERAD). Interacts with CNPY3. This interaction is disrupted in the presence of ATP. Interacts with TLR4 and TLR9, but not with TLR3. Interacts with MZB1 in a calcium-dependent manner. Interacts with METTL23. Interacts with IL1B; the interaction facilitates cargo translocation into the ERGIC. Interacts with EIF2AK3. Phosphorylated by CK2. Post-translationally, N-glycosylated cotranslationally at Asn-217 by STT3A-containing OST-A complex: this glycosylation is constitutive. In response to various stress, 5 additional facultative sites (Asn-62, Asn-107, Asn-445, Asn-481 and Asn-502) can be glycosylated post-translationally by STT3B-containing OST-B complex, leading to a hyperglycosylated form that is degraded by the ER-associated degradation (ERAD) pathway. In normal conditions, the OST-A complex together with CCDC134 prevent glycosylation at facultative sites during protein folding, thereby preventing hyperglycosylation. Mechanistically, nascent HSP90B1 is tethered during translation to a specialized CCDC134-containing translocon that forms a microenvironment for its folding, in which STT3A associates with the SRT pseudosubstrate motif, and prevents access to facultative glycosylation sites until folding is completed, rendering its facultative sites inaccessible to the OST-B complex.

The protein resides in the endoplasmic reticulum lumen. It localises to the sarcoplasmic reticulum lumen. The protein localises to the melanosome. The enzyme catalyses ATP + H2O = ADP + phosphate + H(+). Functionally, ATP-dependent chaperone involved in the processing of proteins in the endoplasmic reticulum, regulating their transport. Together with MESD, acts as a modulator of the Wnt pathway by promoting the folding of LRP6, a coreceptor of the canonical Wnt pathway. When associated with CNPY3, required for proper folding of Toll-like receptors. Promotes folding and trafficking of TLR4 to the cell surface. May participate in the unfolding of cytosolic leaderless cargos (lacking the secretion signal sequence) such as the interleukin 1/IL-1 to facilitate their translocation into the ERGIC (endoplasmic reticulum-Golgi intermediate compartment) and secretion; the translocation process is mediated by the cargo receptor TMED10. This is Endoplasmin (HSP90B1) from Mesocricetus auratus (Golden hamster).